The primary structure comprises 563 residues: CTP synthase (563 aa).

The interval 1–280 (MTKFVFVTGG…DEMICMKLQL (280 aa)) is amidoligase domain. Ser-13 is a CTP binding site. Ser-13 contributes to the UTP binding site. ATP contacts are provided by residues 14–19 (SLGKGI) and Asp-71. Mg(2+) is bound by residues Asp-71 and Glu-154. Residues 161–163 (DIE), 201–206 (KTKPTQ), and Lys-237 each bind CTP. UTP is bound by residues 201-206 (KTKPTQ) and Lys-237. In terms of domain architecture, Glutamine amidotransferase type-1 spans 305–557 (TIAMAGKYTE…IAAALEHHAA (253 aa)). Gly-366 lines the L-glutamine pocket. The active-site Nucleophile; for glutamine hydrolysis is the Cys-393. L-glutamine contacts are provided by residues 394-397 (LGMQ), Glu-417, and Arg-483. Residues His-530 and Glu-532 contribute to the active site.

The protein belongs to the CTP synthase family. As to quaternary structure, homotetramer.

The enzyme catalyses UTP + L-glutamine + ATP + H2O = CTP + L-glutamate + ADP + phosphate + 2 H(+). It catalyses the reaction L-glutamine + H2O = L-glutamate + NH4(+). The catalysed reaction is UTP + NH4(+) + ATP = CTP + ADP + phosphate + 2 H(+). The protein operates within pyrimidine metabolism; CTP biosynthesis via de novo pathway; CTP from UDP: step 2/2. With respect to regulation, allosterically activated by GTP, when glutamine is the substrate; GTP has no effect on the reaction when ammonia is the substrate. The allosteric effector GTP functions by stabilizing the protein conformation that binds the tetrahedral intermediate(s) formed during glutamine hydrolysis. Inhibited by the product CTP, via allosteric rather than competitive inhibition. Functionally, catalyzes the ATP-dependent amination of UTP to CTP with either L-glutamine or ammonia as the source of nitrogen. Regulates intracellular CTP levels through interactions with the four ribonucleotide triphosphates. The chain is CTP synthase from Leptothrix cholodnii (strain ATCC 51168 / LMG 8142 / SP-6) (Leptothrix discophora (strain SP-6)).